We begin with the raw amino-acid sequence, 172 residues long: Large ribosomal subunit protein uL10 (172 aa).

This sequence belongs to the universal ribosomal protein uL10 family. Part of the ribosomal stalk of the 50S ribosomal subunit. The N-terminus interacts with L11 and the large rRNA to form the base of the stalk. The C-terminus forms an elongated spine to which L12 dimers bind in a sequential fashion forming a multimeric L10(L12)X complex.

Its function is as follows. Forms part of the ribosomal stalk, playing a central role in the interaction of the ribosome with GTP-bound translation factors. This is Large ribosomal subunit protein uL10 from Macrococcus caseolyticus (strain JCSC5402) (Macrococcoides caseolyticum).